The sequence spans 224 residues: Urease accessory protein UreF (224 aa).

This sequence belongs to the UreF family. In terms of assembly, ureD, UreF and UreG form a complex that acts as a GTP-hydrolysis-dependent molecular chaperone, activating the urease apoprotein by helping to assemble the nickel containing metallocenter of UreC. The UreE protein probably delivers the nickel.

The protein localises to the cytoplasm. Required for maturation of urease via the functional incorporation of the urease nickel metallocenter. The protein is Urease accessory protein UreF of Citrobacter koseri (strain ATCC BAA-895 / CDC 4225-83 / SGSC4696).